The chain runs to 356 residues: UDP-N-acetylglucosamine--N-acetylmuramyl-(pentapeptide) pyrophosphoryl-undecaprenol N-acetylglucosamine transferase (356 aa).

UDP-N-acetyl-alpha-D-glucosamine is bound by residues 15–17, Asn-127, Arg-163, Ser-191, Ile-244, 263–268, and Gln-288; these read TGG and ALTVSE.

The protein belongs to the glycosyltransferase 28 family. MurG subfamily.

It localises to the cell inner membrane. The enzyme catalyses di-trans,octa-cis-undecaprenyl diphospho-N-acetyl-alpha-D-muramoyl-L-alanyl-D-glutamyl-meso-2,6-diaminopimeloyl-D-alanyl-D-alanine + UDP-N-acetyl-alpha-D-glucosamine = di-trans,octa-cis-undecaprenyl diphospho-[N-acetyl-alpha-D-glucosaminyl-(1-&gt;4)]-N-acetyl-alpha-D-muramoyl-L-alanyl-D-glutamyl-meso-2,6-diaminopimeloyl-D-alanyl-D-alanine + UDP + H(+). Its pathway is cell wall biogenesis; peptidoglycan biosynthesis. Cell wall formation. Catalyzes the transfer of a GlcNAc subunit on undecaprenyl-pyrophosphoryl-MurNAc-pentapeptide (lipid intermediate I) to form undecaprenyl-pyrophosphoryl-MurNAc-(pentapeptide)GlcNAc (lipid intermediate II). The polypeptide is UDP-N-acetylglucosamine--N-acetylmuramyl-(pentapeptide) pyrophosphoryl-undecaprenol N-acetylglucosamine transferase (Klebsiella pneumoniae subsp. pneumoniae (strain ATCC 700721 / MGH 78578)).